The following is a 518-amino-acid chain: Ribonuclease Y (518 aa).

The chain crosses the membrane as a helical span at residues 2 to 22 (GSIIISALLALVIGAVVGFFV). One can recognise a KH domain in the interval 208-271 (TVSVVNLPND…ETARIALDKL (64 aa)). Residues 334 to 427 (VLKHSVEVAF…VAAADALSAA (94 aa)) enclose the HD domain.

The protein belongs to the RNase Y family.

Its subcellular location is the cell membrane. In terms of biological role, endoribonuclease that initiates mRNA decay. The chain is Ribonuclease Y from Geobacillus thermodenitrificans (strain NG80-2).